The chain runs to 210 residues: 7-carboxy-7-deazaguanine synthase (210 aa).

Substrate contacts are provided by residues 12 to 14 (LQG) and Arg27. Residues 18-210 (NAGRPAVFCR…MQTHKYLNIP (193 aa)) form the Radical SAM core domain. Positions 31, 46, and 49 each coordinate [4Fe-4S] cluster. 48-50 (FCD) is an S-adenosyl-L-methionine binding site. Mg(2+) is bound at residue Thr51. Thr90 contacts substrate. S-adenosyl-L-methionine is bound by residues Gly92, 133 to 135 (SPK), and 173 to 176 (QPMD). Pro210 is a binding site for substrate.

Belongs to the radical SAM superfamily. 7-carboxy-7-deazaguanine synthase family. In terms of assembly, homodimer. It depends on [4Fe-4S] cluster as a cofactor. S-adenosyl-L-methionine serves as cofactor. Mg(2+) is required as a cofactor.

The catalysed reaction is 6-carboxy-5,6,7,8-tetrahydropterin + H(+) = 7-carboxy-7-deazaguanine + NH4(+). It participates in purine metabolism; 7-cyano-7-deazaguanine biosynthesis. Catalyzes the complex heterocyclic radical-mediated conversion of 6-carboxy-5,6,7,8-tetrahydropterin (CPH4) to 7-carboxy-7-deazaguanine (CDG), a step common to the biosynthetic pathways of all 7-deazapurine-containing compounds. The polypeptide is 7-carboxy-7-deazaguanine synthase (Burkholderia multivorans (strain ATCC 17616 / 249)).